The sequence spans 894 residues: Desmocollin-1 (894 aa).

A signal peptide spans 1 to 29; it reads MALASAAPGSIFCKQLLFSLLVLTLLCDA. A propeptide spanning residues 30–134 is cleaved from the precursor; the sequence is CQKVYLRVPS…KDTALKRSKR (105 aa). 5 consecutive Cadherin domains span residues 135-242, 243-354, 355-471, 472-575, and 576-682; these read RWAP…APYF, EHRV…PPSF, TETS…GPEC, HPPV…DHAP, and QIDK…STRD. Over 135 to 691 the chain is Extracellular; that stretch reads RWAPIPASLM…DVRPNVILGR (557 aa). Asn-165 is a glycosylation site (N-linked (GlcNAc...) asparagine). Phosphothreonine is present on Thr-385. Asn-546 carries N-linked (GlcNAc...) asparagine glycosylation. Residues 692–714 form a helical membrane-spanning segment; the sequence is WAILAMVLGSVLLLCILFTCFCV. The Cytoplasmic segment spans residues 715 to 894; sequence TAKRTVKKCF…RTLAKTCIKK (180 aa).

As to quaternary structure, binds to JUP/plakoglobin. In terms of tissue distribution, strongly expressed in epidermis, less in lymph node and tongue.

The protein resides in the cell membrane. It localises to the cell junction. The protein localises to the desmosome. A component of desmosome cell-cell junctions which are required for positive regulation of cellular adhesion. Required for desmosome adhesion strength between the granular layers of the epidermis, as a result moderates epidermal proliferation and differentiation. Is therefore required to maintain postnatal epidermal barrier function and normal hair follicle morphology into adulthood. The sequence is that of Desmocollin-1 (DSC1) from Homo sapiens (Human).